A 169-amino-acid polypeptide reads, in one-letter code: Peptide methionine sulfoxide reductase MsrA (169 aa).

The active site involves C10.

The protein belongs to the MsrA Met sulfoxide reductase family.

It catalyses the reaction L-methionyl-[protein] + [thioredoxin]-disulfide + H2O = L-methionyl-(S)-S-oxide-[protein] + [thioredoxin]-dithiol. The catalysed reaction is [thioredoxin]-disulfide + L-methionine + H2O = L-methionine (S)-S-oxide + [thioredoxin]-dithiol. Its function is as follows. Has an important function as a repair enzyme for proteins that have been inactivated by oxidation. Catalyzes the reversible oxidation-reduction of methionine sulfoxide in proteins to methionine. The chain is Peptide methionine sulfoxide reductase MsrA from Streptococcus pyogenes serotype M2 (strain MGAS10270).